Consider the following 258-residue polypeptide: tRNA pseudouridine synthase A (258 aa).

The active-site Nucleophile is D52. Y110 is a binding site for substrate.

The protein belongs to the tRNA pseudouridine synthase TruA family. Homodimer.

The enzyme catalyses uridine(38/39/40) in tRNA = pseudouridine(38/39/40) in tRNA. In terms of biological role, formation of pseudouridine at positions 38, 39 and 40 in the anticodon stem and loop of transfer RNAs. The protein is tRNA pseudouridine synthase A of Francisella philomiragia subsp. philomiragia (strain ATCC 25017 / CCUG 19701 / FSC 153 / O#319-036).